Here is a 1456-residue protein sequence, read N- to C-terminus: ABC-type transporter eriD (1456 aa).

A disordered region spans residues 1-65; that stretch reads MAENEKVTYG…DPRMDPLSGK (65 aa). Positions 30–40 are enriched in polar residues; the sequence is SMTNASRSSVY. The ABC transporter 1 domain maps to 118–372; the sequence is LDIPGLARDI…FIDMGFECPP (255 aa). Helical transmembrane passes span 481–501, 515–535, 561–581, 590–610, 623–643, and 734–754; these read NFLT…SIFY, ALLF…ILQI, VLCD…VLYF, GAFF…SMIF, AMAP…FTIP, and ILFG…EFIA. The segment at 775–799 is disordered; sequence EGASEDEEAGTGSTGTRTQEEPVDK. The 244-residue stretch at 813-1056 folds into the ABC transporter 2 domain; it reads FHWEDVIYDI…IIDYFEGQGA (244 aa). ATP is bound at residue 849–856; that stretch reads GASGAGKT. The next 7 helical transmembrane spans lie at 1148–1168, 1184–1204, 1233–1253, 1269–1289, 1301–1321, 1337–1357, and 1423–1443; these read YIYS…FSFF, VFMG…HFVT, LPWN…PVGM, LMFL…HMLI, IASL…GPSG, PFTY…PAFC, and FGFL…FYWL.

It belongs to the ABC transporter superfamily. ABCG family. PDR (TC 3.A.1.205) subfamily.

It is found in the membrane. ABC-type transporter; part of the gene cluster that mediates the biosynthesis of erinacines, cyathane-xylosides that show unique biological activities, including leishmanicidal activity, stimulating activity for nerve growth-factor synthesis, and agonistic activity toward the kappa opioid receptor. The chain is ABC-type transporter eriD from Hericium erinaceus (Lion's mane mushroom).